The sequence spans 168 residues: CASP-like protein 4D1 (168 aa).

Residues 1-11 lie on the Cytoplasmic side of the membrane; sequence MAPPPPSLASR. The chain crosses the membrane as a helical span at residues 12–32; sequence MAALILRILTFIFLIASLVIL. Topologically, residues 33-57 are extracellular; it reads TTNTATLELDLVEVKVHFKDVYAYR. The chain crosses the membrane as a helical span at residues 58-78; that stretch reads YMLATIVIGLAYTVLQIAFTL. Over 79–97 the chain is Cytoplasmic; the sequence is YYVATGNRMMSGDGNLAFD. Residues 98–118 traverse the membrane as a helical segment; that stretch reads FFGDKVISYILVTGAAAGFAS. Over 119-144 the chain is Extracellular; that stretch reads TKDIKPVFSGSGDFDAFINKGYASAS. A helical membrane pass occupies residues 145–165; the sequence is LLLIGFVCTAVLSVFSSYALP. Residues 166-168 lie on the Cytoplasmic side of the membrane; sequence KQV.

It belongs to the Casparian strip membrane proteins (CASP) family. As to quaternary structure, homodimer and heterodimers.

The protein resides in the cell membrane. This chain is CASP-like protein 4D1, found in Ricinus communis (Castor bean).